Reading from the N-terminus, the 105-residue chain is Probable non-functional immunoglobulin lambda variable 5-48 (105 aa).

The signal sequence occupies residues 1–19 (MAWTPLLLLFLSHCTGSLS). The interval 20–44 (QAVLTQPTSLSASPGASARLTCTLR) is framework-1. Positions 20–105 (QAVLTQPTSL…NAGILFISGL (86 aa)) constitute an Ig-like domain. The interval 45 to 53 (SGISVGSYR) is complementarity-determining-1. Residues 54 to 70 (IYWYQQKPGSPPRYLLN) are framework-2. A complementarity-determining-2 region spans residues 71–77 (YYSDSDK). Residues 78–105 (HQGSGVPSRFSGSKDASTNAGILFISGL) are framework-3.

As to quaternary structure, immunoglobulins are composed of two identical heavy chains and two identical light chains; disulfide-linked.

Its subcellular location is the secreted. The protein localises to the cell membrane. In terms of biological role, probable non-functional open reading frame (ORF) of V region of the variable domain of immunoglobulin light chains. Non-functional ORF generally cannot participate in the synthesis of a productive immunoglobulin chain due to altered V-(D)-J or switch recombination and/or splicing site (at mRNA level) and/or conserved amino acid change (protein level). Immunoglobulins, also known as antibodies, are membrane-bound or secreted glycoproteins produced by B lymphocytes. In the recognition phase of humoral immunity, the membrane-bound immunoglobulins serve as receptors which, upon binding of a specific antigen, trigger the clonal expansion and differentiation of B lymphocytes into immunoglobulins-secreting plasma cells. Secreted immunoglobulins mediate the effector phase of humoral immunity, which results in the elimination of bound antigens. The antigen binding site is formed by the variable domain of one heavy chain, together with that of its associated light chain. Thus, each immunoglobulin has two antigen binding sites with remarkable affinity for a particular antigen. The variable domains are assembled by a process called V-(D)-J rearrangement and can then be subjected to somatic hypermutations which, after exposure to antigen and selection, allow affinity maturation for a particular antigen. This chain is Probable non-functional immunoglobulin lambda variable 5-48, found in Homo sapiens (Human).